A 267-amino-acid polypeptide reads, in one-letter code: Strigolactone esterase D14 (267 aa).

The active-site Nucleophile is the S97. Active-site residues include D218 and H247.

It belongs to the AB hydrolase superfamily. In terms of assembly, interacts with SMXL6, SMXL7 and SMXL8. The interaction with SMXLs occurs in the presence of (2'R) stereoisomers of strigolactones, but not (2'S) stereoisomers. Interacts with MAX2. Forms a complex with MAX2 and SKP1A/ASK1 in presence of strigolactone. Expressed at high levels in rosette and cauline leaves and at lower levels in axillary buds, inflorescences, stems, roots and developing vascular tissue of cotyledons.

Its subcellular location is the cytoplasm. The protein localises to the nucleus. Its function is as follows. Involved in strigolactone signaling pathway. Does not move long distances acropetally in the plant to regulate shoot branching and is rapidly degraded in the presence of strigolactones. Functions downstream of strigolactone synthesis, as a component of hormone signaling and as an enzyme that participates in the conversion of strigolactones to the bioactive form. Acts probably as a strigolactone receptor. Strigolactones are hormones that inhibit tillering and shoot branching through the MAX-dependent pathway, contribute to the regulation of shoot architectural response to phosphate-limiting conditions and function as rhizosphere signal that stimulates hyphal branching of arbuscular mycorrhizal fungi and trigger seed germination of root parasitic weeds. Hydrolyzes methyl carlactonoate (MeCLA), but not carlactone (CL) or carlactonoic acid (CLA). Hydrolyzes the butenolide ring of strigolactones. The initial nucleophilic attack causes an electron shift, followed by the addition of a water molecule, to lead to the release of the ABC ring product and the formation of a 'Ser-97'-stabilized open lactone intermediate. Has no esterase activity for 4-nitrophenyl butyrate. Binds and hydrolyzes the synthetic strigolactone analog GR24 in vitro. Forms a stable covalent complex with the D-ring of strigolactone, which is essential for hormone bioactivity. The D-ring is attached to His-247 of the catalytic triad. The hydrolysis of strigolactone into a covalently linked intermediate molecule initiates a conformational change of D14 to facilitate interaction with MAX2 and formation of the D14-MAX2-SKP1/ASK1 complex to trigger strigolactone signaling. This mechanism defines D14 as a non-canonical hormone receptor with dual functions to generate and sense the active form of strigolactone. The chain is Strigolactone esterase D14 from Arabidopsis thaliana (Mouse-ear cress).